Consider the following 430-residue polypeptide: Evolutionarily conserved signaling intermediate in Toll pathway, mitochondrial (430 aa).

Residues methionine 1 to histidine 48 constitute a mitochondrion transit peptide. Residues leucine 41–threonine 66 are disordered. The span at proline 47–serine 56 shows a compositional bias: polar residues. A Glycyl lysine isopeptide (Lys-Gly) (interchain with G-Cter in ubiquitin) cross-link involves residue lysine 372. The disordered stretch occupies residues leucine 400–serine 430. Residues proline 411–aspartate 420 show a composition bias toward acidic residues.

It belongs to the ECSIT family. Interacts with MAP3K1, SMAD4 and TRAF6. Interacts with SMAD1 only after BMP4-treatment. Part of the mitochondrial complex I assembly/MCIA complex that comprises at least the core subunits TMEM126B, NDUFAF1, ECSIT and ACAD9 and complement subunits such as COA1 and TMEM186. Interacts with NDUFAF1. Interacts with ACAD9. Interacts with TRIM59. Interacts with TMEM70 and TMEM242. Interacts (when ubiquitinated) with NF-kappa-B subunits RELA and NFKB1. Interacts with RIGI, IFIT1 and MAVS; these interactions promote RLR-mediated type I IFN induction. Interacts with SQSTM1; this interaction inhibits TLR4 signaling via functional regulation of the TRAF6-ECSIT complex. Interacts with cereblon/CRBN; this interaction inhibits the ubiquitination of ECSIT. Ubiquitinated on Lys-372; leading to translocation in the nucleus together with RELA and NFKB1 and expression of NF-kappa-B-dependent genes.

The protein localises to the cytoplasm. It is found in the nucleus. The protein resides in the mitochondrion. Functionally, adapter protein that plays a role in different signaling pathways including TLRs and IL-1 pathways or innate antiviral induction signaling. Plays a role in the activation of NF-kappa-B by forming a signal complex with TRAF6 and TAK1/MAP3K7 to activate TAK1/MAP3K7 leading to activation of IKKs. Once ubiquitinated, interacts with the dissociated RELA and NFKB1 proteins and translocates to the nucleus where it induces NF-kappa-B-dependent gene expression. Plays a role in innate antiviral immune response by bridging the pattern recognition receptors RIGI and MDA5/IFIT1 to the MAVS complex at the mitochondrion. Promotes proteolytic activation of MAP3K1. Involved in the BMP signaling pathway. Required for normal embryonic development. As part of the MCIA complex, involved in the assembly of the mitochondrial complex I. This is Evolutionarily conserved signaling intermediate in Toll pathway, mitochondrial from Macaca fascicularis (Crab-eating macaque).